The following is a 439-amino-acid chain: Trigger factor (439 aa).

One can recognise a PPIase FKBP-type domain in the interval 175-260; sequence SDKLVIDYQN…VKSVYVMKGM (86 aa).

The protein belongs to the FKBP-type PPIase family. Tig subfamily.

The protein resides in the cytoplasm. The catalysed reaction is [protein]-peptidylproline (omega=180) = [protein]-peptidylproline (omega=0). In terms of biological role, involved in protein export. Acts as a chaperone by maintaining the newly synthesized protein in an open conformation. Functions as a peptidyl-prolyl cis-trans isomerase. This chain is Trigger factor, found in Ehrlichia chaffeensis (strain ATCC CRL-10679 / Arkansas).